The sequence spans 335 residues: Aliphatic sulfonates import ATP-binding protein SsuB (335 aa).

An ABC transporter domain is found at 74–293 (VRLTRVSKRY…ARASAAFAAL (220 aa)). Residue 106–113 (GRSGCGKS) participates in ATP binding. Residues 308–335 (APAAPNAAGPEGASRGRAAPASGLRWAV) form a disordered region.

Belongs to the ABC transporter superfamily. Aliphatic sulfonates importer (TC 3.A.1.17.2) family. As to quaternary structure, the complex is composed of two ATP-binding proteins (SsuB), two transmembrane proteins (SsuC) and a solute-binding protein (SsuA).

Its subcellular location is the cell inner membrane. The catalysed reaction is ATP + H2O + aliphatic sulfonate-[sulfonate-binding protein]Side 1 = ADP + phosphate + aliphatic sulfonateSide 2 + [sulfonate-binding protein]Side 1.. In terms of biological role, part of the ABC transporter complex SsuABC involved in aliphatic sulfonates import. Responsible for energy coupling to the transport system. This Burkholderia mallei (strain ATCC 23344) protein is Aliphatic sulfonates import ATP-binding protein SsuB.